A 223-amino-acid polypeptide reads, in one-letter code: Glycolipid transfer protein 2 (223 aa).

Residues Asp-69, Asn-73, Trp-116, and His-155 each coordinate a ganglioside GM3 (d18:1(4E)).

Belongs to the GLTP family.

Functionally, transfers glycolipids in vitro. In Arabidopsis thaliana (Mouse-ear cress), this protein is Glycolipid transfer protein 2.